The chain runs to 150 residues: Small ribosomal subunit protein eS19 (150 aa).

It belongs to the eukaryotic ribosomal protein eS19 family. As to quaternary structure, part of the 30S ribosomal subunit.

In terms of biological role, may be involved in maturation of the 30S ribosomal subunit. The chain is Small ribosomal subunit protein eS19 from Thermoplasma volcanium (strain ATCC 51530 / DSM 4299 / JCM 9571 / NBRC 15438 / GSS1).